The primary structure comprises 564 residues: Serine/threonine-protein kinase DBF20 (564 aa).

At serine 17 the chain carries Phosphoserine. The segment at 24-62 (LNIPKPTSPQAQYRPARKSENGRLTPGLPRSYKPCDSDD) is disordered. A Protein kinase domain is found at 169 to 469 (FQILTQVGQG…FEQVRKMSYF (301 aa)). Residues 175–183 (VGQGGYGQV) and lysine 198 each bind ATP. Aspartate 292 (proton acceptor) is an active-site residue. Phosphoserine is present on serine 366. Positions 470 to 547 (AEINFETLRT…RHRDGKQGSS (78 aa)) constitute an AGC-kinase C-terminal domain. Threonine 536 is modified (phosphothreonine).

Belongs to the protein kinase superfamily. Ser/Thr protein kinase family.

The enzyme catalyses L-seryl-[protein] + ATP = O-phospho-L-seryl-[protein] + ADP + H(+). It carries out the reaction L-threonyl-[protein] + ATP = O-phospho-L-threonyl-[protein] + ADP + H(+). In terms of biological role, is probably a Ser/Thr-protein kinase that may function in initiation of DNA synthesis and also in late nuclear division. This chain is Serine/threonine-protein kinase DBF20 (DBF20), found in Saccharomyces cerevisiae (strain ATCC 204508 / S288c) (Baker's yeast).